The following is a 199-amino-acid chain: Guanylyl cyclase-activating protein 1 (199 aa).

G2 carries N-myristoyl glycine lipidation. A Deamidated asparagine modification is found at N3. 4 EF-hand domains span residues 13-48 (SATE…KNLS), 50-85 (SANK…VLKG), 86-121 (KVDQ…IRAI), and 129-164 (TAEE…DEVL). 15 residues coordinate Ca(2+): D63, N65, D67, Y69, E74, D99, D101, N103, C105, E110, D142, N144, D146, E148, and E153.

In terms of tissue distribution, retina, in rod and cone outer segments, and pineal gland.

Functionally, stimulates retinal guanylyl cyclase when free calcium ions concentration is low and inhibits guanylyl cyclase when free calcium ions concentration is elevated. This Ca(2+)-sensitive regulation of retinal guanylyl cyclase is a key event in recovery of the dark state of rod photoreceptors following light exposure. In Gallus gallus (Chicken), this protein is Guanylyl cyclase-activating protein 1 (GUCA1A).